The following is a 129-amino-acid chain: uncharacterized protein (129 aa).

The helical transmembrane segment at 77 to 97 (ILAVFIISFIIVVVGVLLLGL) threads the bilayer. Residues 109-129 (SSNDKKLQSNDEEKQALAEKA) form a disordered region. Residues 111-129 (NDKKLQSNDEEKQALAEKA) show a composition bias toward basic and acidic residues.

The protein localises to the vacuole membrane. This is an uncharacterized protein from Saccharomyces cerevisiae (strain ATCC 204508 / S288c) (Baker's yeast).